The sequence spans 638 residues: Sodium- and chloride-dependent glycine transporter 1 (638 aa).

Positions 1 to 29 are disordered; it reads MAAAQGPVAPSSLEQNGAVPSEATKKDQN. Residues 1 to 40 are Cytoplasmic-facing; sequence MAAAQGPVAPSSLEQNGAVPSEATKKDQNLKRGNWGNQIE. Helical transmembrane passes span 41–61, 69–88, and 112–132; these read FVLTSVGYAVGLGNVWRFPYL, AFMFPYFIMLIFCGIPLFFM, and GVGYGMMVVSTYIGIYYNVVI. Residues 133–219 lie on the Extracellular side of the membrane; the sequence is CIAFYYFFSS…DDIGNFGEVR (87 aa). N-linked (GlcNAc...) asparagine glycans are attached at residues Asn-169, Asn-172, Asn-182, and Asn-188. 9 consecutive transmembrane segments (helical) span residues 220-238, 247-264, 300-317, 329-350, 383-402, 431-449, 465-485, 506-525, and 544-562; these read LPLLGCLGVSWVVVFLCLI, VVYFTATFPYVVLTILFI, IFYSLGCAWGGLVTMASY, VIISITNCATSVYAGFVIFSIL, LPISPLWSLLFFFMLILLGL, YVTLGVAVAGFLLGIPLTS, SFSLVIISCIMCVSIMYIYGH, ICWRFVSPAIIFFILIFSVI, and IGFLMALSSVICIPLYALF. Residues 563-638 lie on the Cytoplasmic side of the membrane; it reads QFCRTDGDTL…GSSRFQDSRI (76 aa). Positions 597-638 are disordered; the sequence is RYAPTTTPSPEDGLEVQPLHPDKAQIPMVGSNGSSRFQDSRI. Thr-603 bears the Phosphothreonine mark. Phosphoserine is present on residues Ser-605 and Ser-630. The segment at 627–638 is essential for interaction with EXOC1; the sequence is SNGSSRFQDSRI. Positions 627-638 are enriched in polar residues; that stretch reads SNGSSRFQDSRI.

It belongs to the sodium:neurotransmitter symporter (SNF) (TC 2.A.22) family. SLC6A9 subfamily. As to quaternary structure, interacts with EXOC1; interaction increases the transporter capacity of SLC6A9 probably by promoting its insertion into the cell membrane. Interacts with EXOC3 and EXOC4.

The protein resides in the cell membrane. The catalysed reaction is glycine(out) + chloride(out) + 2 Na(+)(out) = glycine(in) + chloride(in) + 2 Na(+)(in). Functionally, sodium- and chloride-dependent glycine transporter which is essential for regulating glycine concentrations at inhibitory glycinergic synapses. In Bos taurus (Bovine), this protein is Sodium- and chloride-dependent glycine transporter 1 (SLC6A9).